Consider the following 212-residue polypeptide: TATA-box-binding protein 2 (212 aa).

Repeat copies occupy residues 30-114 and 120-201.

Belongs to the TBP family. As to quaternary structure, belongs to the TFIID complex together with the TBP-associated factors (TAFs). Binds DNA as monomer.

It is found in the nucleus. In terms of biological role, general transcription factor that functions at the core of the DNA-binding multiprotein factor TFIID. Binding of TFIID to the TATA box is the initial transcriptional step of the pre-initiation complex (PIC), playing a role in the activation of eukaryotic genes transcribed by RNA polymerase II. The chain is TATA-box-binding protein 2 from Entamoeba histolytica (strain ATCC 30459 / HM-1:IMSS / ABRM).